Reading from the N-terminus, the 122-residue chain is Large ribosomal subunit protein uL14c (122 aa).

It belongs to the universal ribosomal protein uL14 family. As to quaternary structure, part of the 50S ribosomal subunit.

The protein localises to the plastid. Its subcellular location is the chloroplast. In terms of biological role, binds to 23S rRNA. This chain is Large ribosomal subunit protein uL14c, found in Gossypium barbadense (Sea Island cotton).